The chain runs to 403 residues: Cytoplasmic tRNA 2-thiolation protein 2 (403 aa).

The protein belongs to the CTU2/NCS2 family.

Its subcellular location is the cytoplasm. The protein operates within tRNA modification; 5-methoxycarbonylmethyl-2-thiouridine-tRNA biosynthesis. Functionally, plays a central role in 2-thiolation of mcm(5)S(2)U at tRNA wobble positions of tRNA(Lys), tRNA(Glu) and tRNA(Gln). May act by forming a heterodimer with NCS6/CTU1 that ligates sulfur from thiocarboxylated URM1 onto the uridine of tRNAs at wobble position. This is Cytoplasmic tRNA 2-thiolation protein 2 from Drosophila willistoni (Fruit fly).